A 125-amino-acid chain; its full sequence is Ribonuclease pancreatic (125 aa).

Residues Lys7 and Arg10 each contribute to the substrate site. His12 functions as the Proton acceptor in the catalytic mechanism. 4 disulfides stabilise this stretch: Cys27/Cys85, Cys41/Cys96, Cys59/Cys111, and Cys66/Cys73. Asn35 carries an N-linked (GlcNAc...) asparagine glycan. Substrate contacts are provided by residues 42–46 (KPVNT), Lys67, and Arg86. The Proton donor role is filled by His120.

This sequence belongs to the pancreatic ribonuclease family. Monomer. Interacts with and forms tight 1:1 complexes with RNH1. Dimerization of two such complexes may occur. Interaction with RNH1 inhibits this protein. As to expression, pancreas.

It localises to the secreted. It catalyses the reaction an [RNA] containing cytidine + H2O = an [RNA]-3'-cytidine-3'-phosphate + a 5'-hydroxy-ribonucleotide-3'-[RNA].. The catalysed reaction is an [RNA] containing uridine + H2O = an [RNA]-3'-uridine-3'-phosphate + a 5'-hydroxy-ribonucleotide-3'-[RNA].. Its function is as follows. Endonuclease that catalyzes the cleavage of RNA on the 3' side of pyrimidine nucleotides. Acts on single-stranded and double-stranded RNA. The polypeptide is Ribonuclease pancreatic (RNASE1) (Spalax ehrenbergi (Middle East blind mole rat)).